A 209-amino-acid chain; its full sequence is Superoxide dismutase [Mn/Fe] (209 aa).

Positions 38, 90, 172, and 176 each coordinate Fe(3+). Mn(2+) contacts are provided by histidine 38, histidine 90, aspartate 172, and histidine 176.

It belongs to the iron/manganese superoxide dismutase family. Requires Mn(2+) as cofactor. It depends on Fe(3+) as a cofactor.

It carries out the reaction 2 superoxide + 2 H(+) = H2O2 + O2. Functionally, destroys superoxide anion radicals which are normally produced within the cells and which are toxic to biological systems. Catalyzes the dismutation of superoxide anion radicals into O2 and H2O2 by successive reduction and oxidation of the transition metal ion at the active site. This is Superoxide dismutase [Mn/Fe] (sodB) from Rickettsia conorii (strain ATCC VR-613 / Malish 7).